Reading from the N-terminus, the 299-residue chain is MNGILNILKPPGMTSHDVVSVVRKKLNMKKVGHTGTLDPNAAGVLPICIGQATKISQFLLDGKKKYRAELTLGIETNTEDIDGEILRQREVTSSPDEIREAVLSFIGEYKQIPPMYSAIKIKGKKLYELARQGVEIERAERTVTIYHIEIIEIFKEKVIFDVLCSKGTYIRTLCKDIGEVLGCGGVMSFLLRTASSDFSLDTAITIEELQALENVEDILLPMDYPLQHMSKAIVKSAYSKQVLNGNRIYSNYLIDTIHEPIGQEVCVYLEKEFVGFGIVRNEDHNQKYIKILRLLFEKE.

Residue D38 is the Nucleophile of the active site.

This sequence belongs to the pseudouridine synthase TruB family. Type 1 subfamily.

It catalyses the reaction uridine(55) in tRNA = pseudouridine(55) in tRNA. In terms of biological role, responsible for synthesis of pseudouridine from uracil-55 in the psi GC loop of transfer RNAs. This chain is tRNA pseudouridine synthase B, found in Alkaliphilus oremlandii (strain OhILAs) (Clostridium oremlandii (strain OhILAs)).